The following is a 1518-amino-acid chain: Probable serine/threonine-protein kinase HSL1 (1518 aa).

2 disordered regions span residues 1–43 (MTGH…GHLE) and 55–83 (RLSQ…PWKL). A compositionally biased stretch (polar residues) spans 55-68 (RLSQPDSTVSVATK). A Protein kinase domain is found at 81 to 369 (WKLGKTLGKG…TQEILKHPLI (289 aa)). Residues 87–95 (LGKGSSGRV) and lysine 110 contribute to the ATP site. The active-site Proton acceptor is the aspartate 239. The segment at 467 to 502 (LSSSSENKKSATESSVNEPRIEYASKTANNTGLRSE) is disordered. Polar residues predominate over residues 492 to 501 (KTANNTGLRS). Serine 511 carries the post-translational modification Phosphoserine. Residues 599–611 (SNSRLSLSASTSR) show a composition bias toward low complexity. The disordered stretch occupies residues 599-651 (SNSRLSLSASTSRETVHDNEMPLPQLPKSPSRYSLSRRAIHASPSTKSIHKSL). Serine 629 and serine 685 each carry phosphoserine. The tract at residues 741–783 (EEEDNEKERDTQRQRQNDTKSSADTFTISGVSTNKENEGPEYP) is disordered. Positions 746 to 758 (EKERDTQRQRQND) are enriched in basic and acidic residues. Over residues 759–774 (TKSSADTFTISGVSTN) the composition is skewed to polar residues. Residues serine 837 and serine 866 each carry the phosphoserine modification. Positions 856–876 (EQLQKKNDRPSPLKPIQHQEL) are enriched in basic and acidic residues. Disordered stretches follow at residues 856–898 (EQLQ…RRNI), 1005–1030 (DDKH…KQSA), 1150–1170 (APSD…RASV), and 1220–1243 (SPEN…RDSN). At serine 1220 the chain carries Phosphoserine. Over residues 1222 to 1243 (ENPSNTHMQKRFSSTRGSRDSN) the composition is skewed to polar residues. The residue at position 1250 (serine 1250) is a Phosphoserine. Residues 1259–1291 (EEDQDGHTSQADILESSMSYSKRRPSEESVNPK) are disordered. A compositionally biased stretch (polar residues) spans 1265–1278 (HTSQADILESSMSY). Phosphoserine is present on residues serine 1284, serine 1287, and serine 1325.

The protein belongs to the protein kinase superfamily. CAMK Ser/Thr protein kinase family. NIM1 subfamily.

It localises to the bud neck. It carries out the reaction L-seryl-[protein] + ATP = O-phospho-L-seryl-[protein] + ADP + H(+). It catalyses the reaction L-threonyl-[protein] + ATP = O-phospho-L-threonyl-[protein] + ADP + H(+). In Saccharomyces cerevisiae (strain ATCC 204508 / S288c) (Baker's yeast), this protein is Probable serine/threonine-protein kinase HSL1 (HSL1).